The following is a 339-amino-acid chain: Glyceraldehyde-3-phosphate dehydrogenase (339 aa).

Residues 12 to 13 (RI), Asp39, Arg84, and Ser127 contribute to the NAD(+) site. D-glyceraldehyde 3-phosphate is bound by residues 157-159 (SCT), Thr188, Arg203, 216-217 (TG), and Arg239. The active-site Nucleophile is the Cys158. Asn320 is an NAD(+) binding site.

The protein belongs to the glyceraldehyde-3-phosphate dehydrogenase family. In terms of assembly, homotetramer.

It localises to the cytoplasm. The catalysed reaction is D-glyceraldehyde 3-phosphate + phosphate + NAD(+) = (2R)-3-phospho-glyceroyl phosphate + NADH + H(+). It participates in carbohydrate degradation; glycolysis; pyruvate from D-glyceraldehyde 3-phosphate: step 1/5. Catalyzes the oxidative phosphorylation of glyceraldehyde 3-phosphate (G3P) to 1,3-bisphosphoglycerate (BPG) using the cofactor NAD. The first reaction step involves the formation of a hemiacetal intermediate between G3P and a cysteine residue, and this hemiacetal intermediate is then oxidized to a thioester, with concomitant reduction of NAD to NADH. The reduced NADH is then exchanged with the second NAD, and the thioester is attacked by a nucleophilic inorganic phosphate to produce BPG. In Mycobacterium leprae (strain TN), this protein is Glyceraldehyde-3-phosphate dehydrogenase (gapA).